The following is a 119-amino-acid chain: Dihydroneopterin aldolase (119 aa).

Residues glutamate 21, tyrosine 53, and 72–73 contribute to the substrate site; that span reads IE. Lysine 99 serves as the catalytic Proton donor/acceptor.

The protein belongs to the DHNA family.

It carries out the reaction 7,8-dihydroneopterin = 6-hydroxymethyl-7,8-dihydropterin + glycolaldehyde. The protein operates within cofactor biosynthesis; tetrahydrofolate biosynthesis; 2-amino-4-hydroxy-6-hydroxymethyl-7,8-dihydropteridine diphosphate from 7,8-dihydroneopterin triphosphate: step 3/4. Catalyzes the conversion of 7,8-dihydroneopterin to 6-hydroxymethyl-7,8-dihydropterin. This chain is Dihydroneopterin aldolase (folB), found in Streptococcus pyogenes serotype M6 (strain ATCC BAA-946 / MGAS10394).